We begin with the raw amino-acid sequence, 231 residues long: Endo-1,4-beta-xylanase A (231 aa).

The signal sequence occupies residues methionine 1–alanine 19. Asparagine 32 is a glycosylation site (N-linked (GlcNAc...) asparagine). The GH11 domain occupies glutamine 41 to glutamine 229. Glutamate 125 (nucleophile) is an active-site residue. Glutamate 216 functions as the Proton donor in the catalytic mechanism.

Belongs to the glycosyl hydrolase 11 (cellulase G) family.

Its subcellular location is the secreted. It carries out the reaction Endohydrolysis of (1-&gt;4)-beta-D-xylosidic linkages in xylans.. The protein operates within glycan degradation; xylan degradation. With respect to regulation, inhibited by the proteinaceous endoxylanase inhibitor I from T.aestivum (TAXI-I). Its function is as follows. Endo-1,4-beta-xylanase involved in the hydrolysis of xylan, a major structural heterogeneous polysaccharide found in plant biomass representing the second most abundant polysaccharide in the biosphere, after cellulose. Plays an important role in causing fusarium head blight (FHB) on cereal crops. This is Endo-1,4-beta-xylanase A (XYLA) from Gibberella zeae (strain ATCC MYA-4620 / CBS 123657 / FGSC 9075 / NRRL 31084 / PH-1) (Wheat head blight fungus).